The chain runs to 53 residues: UPF0391 membrane protein YPTS_0599 (53 aa).

A run of 2 helical transmembrane segments spans residues 4-24 (WGII…GGLA) and 27-47 (AAWA…ISLF).

This sequence belongs to the UPF0391 family.

The protein localises to the cell membrane. The polypeptide is UPF0391 membrane protein YPTS_0599 (Yersinia pseudotuberculosis serotype IB (strain PB1/+)).